The sequence spans 212 residues: MSNKDTSILKGNVDHEEADSNPKLRKIGRPPALRIIPPLNFCPVERQLYRSGQPSAINQSFLEQLNLKTILWLASEEPQDDFLEFSNDHNINIEFVGIINEFSNYQNYNTNQTLTVNPWDALNEQTIKRALELIVNRENYPLLVCCGMGRHRTGTVIGCLRRLQGWNLASVSEEYRRFTGARGGRILVELLIESFDIGSVEIDPSKVPDWLT.

The interval 1-27 (MSNKDTSILKGNVDHEEADSNPKLRKI) is disordered. Basic and acidic residues predominate over residues 12-22 (NVDHEEADSNP). In terms of domain architecture, Tyrosine-protein phosphatase spans 40-208 (NFCPVERQLY…SVEIDPSKVP (169 aa)). Catalysis depends on cysteine 146, which acts as the Phosphocysteine intermediate.

Belongs to the protein-tyrosine phosphatase family.

It localises to the cytoplasm. The enzyme catalyses O-phospho-L-tyrosyl-[protein] + H2O = L-tyrosyl-[protein] + phosphate. Putative tyrosine-protein phosphatase required for protection against superoxide stress. The sequence is that of Putative tyrosine-protein phosphatase OCA1 (OCA1) from Scheffersomyces stipitis (strain ATCC 58785 / CBS 6054 / NBRC 10063 / NRRL Y-11545) (Yeast).